A 359-amino-acid polypeptide reads, in one-letter code: 3-dehydroquinate synthase (359 aa).

Residues 106-110 (GVVGD), 130-131 (TT), Lys-143, Lys-152, and 170-173 (TLQT) each bind NAD(+). Positions 185, 248, and 265 each coordinate Zn(2+).

The protein belongs to the sugar phosphate cyclases superfamily. Dehydroquinate synthase family. It depends on Co(2+) as a cofactor. Zn(2+) is required as a cofactor. Requires NAD(+) as cofactor.

It localises to the cytoplasm. It carries out the reaction 7-phospho-2-dehydro-3-deoxy-D-arabino-heptonate = 3-dehydroquinate + phosphate. It participates in metabolic intermediate biosynthesis; chorismate biosynthesis; chorismate from D-erythrose 4-phosphate and phosphoenolpyruvate: step 2/7. Its function is as follows. Catalyzes the conversion of 3-deoxy-D-arabino-heptulosonate 7-phosphate (DAHP) to dehydroquinate (DHQ). This Desulforamulus reducens (strain ATCC BAA-1160 / DSM 100696 / MI-1) (Desulfotomaculum reducens) protein is 3-dehydroquinate synthase.